The following is a 393-amino-acid chain: Stearoyl-[acyl-carrier-protein] 9-desaturase, chloroplastic (393 aa).

The transit peptide at 1-30 (MALNFNSPTFQSIKTTRRPCSPLRSPRVFM) directs the protein to the chloroplast. Fe cation-binding residues include glutamate 135, glutamate 173, histidine 176, glutamate 226, glutamate 259, and histidine 262.

This sequence belongs to the fatty acid desaturase type 2 family. In terms of assembly, homodimer. The cofactor is Fe(2+).

The protein resides in the plastid. It is found in the chloroplast. The enzyme catalyses octadecanoyl-[ACP] + 2 reduced [2Fe-2S]-[ferredoxin] + O2 + 2 H(+) = (9Z)-octadecenoyl-[ACP] + 2 oxidized [2Fe-2S]-[ferredoxin] + 2 H2O. Its pathway is lipid metabolism; fatty acid metabolism. Its function is as follows. Converts stearoyl-ACP to oleoyl-ACP by introduction of a cis double bond between carbons 9 and 10 of the acyl chain. The sequence is that of Stearoyl-[acyl-carrier-protein] 9-desaturase, chloroplastic from Solanum commersonii (Commerson's wild potato).